A 360-amino-acid polypeptide reads, in one-letter code: MKNNYTSLKSSMDEGDELKTGHEFDLEKGILPEYNSEEEGALPPYSDISKLANPVPEDSSTGPTETTNPNVERRQEFKDSHPNIYSLLRLLISVLAVIVVFFTAWVCVNPLEKSIFGKVAFSVTIGITCPIVFIAIFCFFETWTQAVAQCIKVTVIFLAQCVKVTVISLAKCVKVIAVGLYNSKKDLVVTIWLAWVVICFILFGCVKDGRLNLNKALICSTSSISAALFFILLLVCIPIWTLKHMLFGLFQVLGVQSCVVIVTKGLMYLLDKHIDATGYEIEASSLFVIGNFLFFYEMERPGALKRMPKFIGNGIASFLGGIANAIRGIANAIGGIANAFRGANDNNDIPLGEMDVESEV.

Polar residues-rich tracts occupy residues 1 to 10 and 58 to 70; these read MKNNYTSLKS and DSSTGPTETTNPN. Disordered regions lie at residues 1-20 and 37-75; these read MKNNYTSLKSSMDEGDELKT and EEEGALPPYSDISKLANPVPEDSSTGPTETTNPNVERRQ. The next 8 membrane-spanning stretches (helical) occupy residues 90–110, 120–140, 150–170, 186–206, 222–242, 246–266, 276–296, and 310–330; these read LLISVLAVIVVFFTAWVCVNP, AFSVTIGITCPIVFIAIFCFF, CIKVTVIFLAQCVKVTVISLA, DLVVTIWLAWVVICFILFGCV, SSISAALFFILLLVCIPIWTL, LFGLFQVLGVQSCVVIVTKGL, ATGYEIEASSLFVIGNFLFFY, and FIGNGIASFLGGIANAIRGIA.

Belongs to the WTF family. As to quaternary structure, homomer. Interacts with other proteins that exhibit high sequence similarity.

It localises to the spore membrane. The protein localises to the vacuole membrane. In terms of biological role, acts as a suppressor component of the dual wtf meiotic drive system, and can suppress but not confer meiotic drive by compatible poisons. Wtf meiotic drive systems promote unequal transmission of alleles from the parental zygote to progeny spores by encoding a poison and an antidote from the same locus; the poison is trans-acting and forms toxic aggregates in all spores within an ascus, wherease the antidote is spore-specific and targets aggregates for degradation by the vacuole. Meiotic drive by wtf systems therefore lead to poisoning of all progeny that do not inherit the dual poison/antidote allele, or express a compatible antidote. The protein is Meiotic drive suppressor wtf13 of Schizosaccharomyces kambucha (Fission yeast).